The chain runs to 144 residues: Large ribosomal subunit protein uL15 (144 aa).

Residues 1-58 (MKLNNLSPAPGSKHAEKRVGRGIGSGLGKTGGRGHKGQKSRSGGSVKPGFEGGQMPLQ) are disordered. Residues 21 to 31 (RGIGSGLGKTG) show a composition bias toward gly residues.

Belongs to the universal ribosomal protein uL15 family. In terms of assembly, part of the 50S ribosomal subunit.

In terms of biological role, binds to the 23S rRNA. The polypeptide is Large ribosomal subunit protein uL15 (Chromohalobacter salexigens (strain ATCC BAA-138 / DSM 3043 / CIP 106854 / NCIMB 13768 / 1H11)).